Reading from the N-terminus, the 337-residue chain is Trace amine-associated receptor 5 (337 aa).

Residues 1 to 34 (MRAVFIQGAEEHPAAFCYQVNGSCPRTVHTLGIQ) lie on the Extracellular side of the membrane. The N-linked (GlcNAc...) asparagine glycan is linked to Asn21. Cystine bridges form between Cys24–Cys188 and Cys99–Cys192. A helical membrane pass occupies residues 35-55 (LVIYLACAAGMLIIVLGNLFV). The Cytoplasmic portion of the chain corresponds to 56–70 (AFAVSYFKALHTPTN). Residues 71-91 (FLLLSLALADMFLGLLVLPLS) form a helical membrane-spanning segment. Over 92 to 109 (TIRSVESCWFFGDFLCRL) the chain is Extracellular. A helical membrane pass occupies residues 110-130 (HTYLDPLFCLTSIFHLCFISI). At 131 to 154 (DRHCAICDPLLYPSKFTVRVALRY) the chain is on the cytoplasmic side. The helical transmembrane segment at 155 to 175 (ILAGWGVPAAYTSLFLYTDVV) threads the bilayer. The tract at residues 176–189 (ETRLSQWLEEMPCV) is extracellular Loop 2 (ECL2). Topologically, residues 176-204 (ETRLSQWLEEMPCVGSCQLLLNKFWGWLN) are extracellular. A helical membrane pass occupies residues 205–225 (FPLFFVPCLIMISLYVKIFVV). Residues 226 to 253 (ATRQAQQITTLSKNLAGAAKHDRKAAKT) lie on the Cytoplasmic side of the membrane. The chain crosses the membrane as a helical span at residues 254–274 (LGIAVGIYLLCWLPFTIDTMV). Residues 275–284 (DSLLHFITPP) lie on the Extracellular side of the membrane. Residues 285-307 (LVFDIFIWFAYFNSACNPIIYVF) form a helical membrane-spanning segment. Residues 308–337 (SYQWFRKALKLTLSQKVFSPQTRTVDLYQE) are Cytoplasmic-facing.

This sequence belongs to the G-protein coupled receptor 1 family.

It localises to the cell membrane. Olfactory receptor specific for trimethylamine, a trace amine. Trimethylamine is a bacterial metabolite found in some animal odors. Trimethylamine-binding causes a conformation change that triggers signaling via G(s)-class of G alpha proteins (GNAL or GNAS). This Pan troglodytes (Chimpanzee) protein is Trace amine-associated receptor 5 (TAAR5).